Consider the following 282-residue polypeptide: Sulfur carrier protein FdhD (282 aa).

Cys126 functions as the Cysteine persulfide intermediate in the catalytic mechanism. 265-270 serves as a coordination point for Mo-bis(molybdopterin guanine dinucleotide); it reads FVRNNR.

The protein belongs to the FdhD family.

It localises to the cytoplasm. Functionally, required for formate dehydrogenase (FDH) activity. Acts as a sulfur carrier protein that transfers sulfur from IscS to the molybdenum cofactor prior to its insertion into FDH. This is Sulfur carrier protein FdhD from Thermoplasma acidophilum (strain ATCC 25905 / DSM 1728 / JCM 9062 / NBRC 15155 / AMRC-C165).